The chain runs to 491 residues: Aspartyl/glutamyl-tRNA(Asn/Gln) amidotransferase subunit B (491 aa).

This sequence belongs to the GatB/GatE family. GatB subfamily. Heterotrimer of A, B and C subunits.

The catalysed reaction is L-glutamyl-tRNA(Gln) + L-glutamine + ATP + H2O = L-glutaminyl-tRNA(Gln) + L-glutamate + ADP + phosphate + H(+). It carries out the reaction L-aspartyl-tRNA(Asn) + L-glutamine + ATP + H2O = L-asparaginyl-tRNA(Asn) + L-glutamate + ADP + phosphate + 2 H(+). Allows the formation of correctly charged Asn-tRNA(Asn) or Gln-tRNA(Gln) through the transamidation of misacylated Asp-tRNA(Asn) or Glu-tRNA(Gln) in organisms which lack either or both of asparaginyl-tRNA or glutaminyl-tRNA synthetases. The reaction takes place in the presence of glutamine and ATP through an activated phospho-Asp-tRNA(Asn) or phospho-Glu-tRNA(Gln). The chain is Aspartyl/glutamyl-tRNA(Asn/Gln) amidotransferase subunit B from Paraburkholderia phytofirmans (strain DSM 17436 / LMG 22146 / PsJN) (Burkholderia phytofirmans).